The following is a 180-amino-acid chain: Ribulose bisphosphate carboxylase small subunit, chloroplastic (180 aa).

Residues 1–56 constitute a chloroplast transit peptide; sequence MASSIMSSAAVATRSNGAQASMVAPFTGLKSNASFPVSRKTNLDITSIASNGGRVR.

Belongs to the RuBisCO small chain family. Heterohexadecamer of 8 large and 8 small subunits.

The protein localises to the plastid. It is found in the chloroplast. RuBisCO catalyzes two reactions: the carboxylation of D-ribulose 1,5-bisphosphate, the primary event in carbon dioxide fixation, as well as the oxidative fragmentation of the pentose substrate. Both reactions occur simultaneously and in competition at the same active site. Although the small subunit is not catalytic it is essential for maximal activity. This chain is Ribulose bisphosphate carboxylase small subunit, chloroplastic, found in Stellaria longipes (Longstalk starwort).